A 339-amino-acid polypeptide reads, in one-letter code: Replication factor C subunit 5 (339 aa).

59–66 (GPPGTGKT) serves as a coordination point for ATP.

It belongs to the activator 1 small subunits family. As to quaternary structure, subunit of the RFC complex, an heteropentameric complex consisting of a large subunit RFC1 and four small subunits RFC2, RFC3, RFC4 and RFC5; the RFC complex interacts with PCNA. Forms an heterotetrameric complex with RFC2, RFC3 and RFC4; this complex has ATPase activity but is not stimulated by PCNA. The heterotetramer of subunits RFC2, RFC3, RFC4 and RFC5 interacts with RAD17.

It localises to the nucleus. In terms of biological role, subunit of the replication factor C (RFC) complex which acts during elongation of primed DNA templates by DNA polymerases delta and epsilon, and is necessary for ATP-dependent loading of proliferating cell nuclear antigen (PCNA) onto primed DNA. The sequence is that of Replication factor C subunit 5 (Rfc5) from Mus musculus (Mouse).